Consider the following 318-residue polypeptide: Probable dual-specificity RNA methyltransferase RlmN (318 aa).

Residue Glu-63 is the Proton acceptor of the active site. Residues 69-299 enclose the Radical SAM core domain; the sequence is HDYGRTVCVS…VSLRRELGAD (231 aa). Cys-76 and Cys-304 are oxidised to a cystine. Positions 83, 87, and 90 each coordinate [4Fe-4S] cluster. Residues 130–131, Ser-162, 185–187, and Asn-261 contribute to the S-adenosyl-L-methionine site; these read GE and SLH. The active-site S-methylcysteine intermediate is the Cys-304.

Belongs to the radical SAM superfamily. RlmN family. It depends on [4Fe-4S] cluster as a cofactor.

The protein localises to the cytoplasm. It catalyses the reaction adenosine(2503) in 23S rRNA + 2 reduced [2Fe-2S]-[ferredoxin] + 2 S-adenosyl-L-methionine = 2-methyladenosine(2503) in 23S rRNA + 5'-deoxyadenosine + L-methionine + 2 oxidized [2Fe-2S]-[ferredoxin] + S-adenosyl-L-homocysteine. It carries out the reaction adenosine(37) in tRNA + 2 reduced [2Fe-2S]-[ferredoxin] + 2 S-adenosyl-L-methionine = 2-methyladenosine(37) in tRNA + 5'-deoxyadenosine + L-methionine + 2 oxidized [2Fe-2S]-[ferredoxin] + S-adenosyl-L-homocysteine. Specifically methylates position 2 of adenine 2503 in 23S rRNA and position 2 of adenine 37 in tRNAs. The polypeptide is Probable dual-specificity RNA methyltransferase RlmN (Desulforudis audaxviator (strain MP104C)).